Reading from the N-terminus, the 1412-residue chain is DNA-directed RNA polymerase subunit beta' (1412 aa).

Residues cysteine 70, cysteine 72, cysteine 85, and cysteine 88 each contribute to the Zn(2+) site. Mg(2+) contacts are provided by aspartate 460, aspartate 462, and aspartate 464. Residues cysteine 819, cysteine 893, cysteine 900, and cysteine 903 each contribute to the Zn(2+) site. Positions 1391–1412 (AEESFEFGTPETPAAEQQHSGE) are disordered.

Belongs to the RNA polymerase beta' chain family. The RNAP catalytic core consists of 2 alpha, 1 beta, 1 beta' and 1 omega subunit. When a sigma factor is associated with the core the holoenzyme is formed, which can initiate transcription. Requires Mg(2+) as cofactor. The cofactor is Zn(2+).

The enzyme catalyses RNA(n) + a ribonucleoside 5'-triphosphate = RNA(n+1) + diphosphate. Functionally, DNA-dependent RNA polymerase catalyzes the transcription of DNA into RNA using the four ribonucleoside triphosphates as substrates. The polypeptide is DNA-directed RNA polymerase subunit beta' (Paraburkholderia phytofirmans (strain DSM 17436 / LMG 22146 / PsJN) (Burkholderia phytofirmans)).